The primary structure comprises 52 residues: DNA-directed RNA polymerase subunit Rpo12 (52 aa).

Positions 13, 30, and 33 each coordinate Zn(2+).

It belongs to the archaeal Rpo12/eukaryotic RPC10 RNA polymerase subunit family. As to quaternary structure, part of the RNA polymerase complex. The cofactor is Zn(2+).

It is found in the cytoplasm. The enzyme catalyses RNA(n) + a ribonucleoside 5'-triphosphate = RNA(n+1) + diphosphate. DNA-dependent RNA polymerase (RNAP) catalyzes the transcription of DNA into RNA using the four ribonucleoside triphosphates as substrates. This Pyrobaculum neutrophilum (strain DSM 2338 / JCM 9278 / NBRC 100436 / V24Sta) (Thermoproteus neutrophilus) protein is DNA-directed RNA polymerase subunit Rpo12.